The primary structure comprises 134 residues: Transcription antitermination protein NusB (134 aa).

This sequence belongs to the NusB family.

Its function is as follows. Involved in transcription antitermination. Required for transcription of ribosomal RNA (rRNA) genes. Binds specifically to the boxA antiterminator sequence of the ribosomal RNA (rrn) operons. This Shewanella baltica (strain OS223) protein is Transcription antitermination protein NusB.